A 957-amino-acid chain; its full sequence is MTQTLSQLENRGAFIERHIGPDAAQQQEMLNAVGAESLNALTGQIVPKDIQLATPPQVGEAATEYAALAELKAIAGRNKRFTSYIGMGYTAVQLPPVILRNMLENPGWYTAYTPYQPEVSQGRLEALLNFQQVTLDLTGLDMASASLLDEATAAAEAMAMAKRVSKLKNANRFFVASDVHPQTLDVVRTRAETFGFDVIVDDAAKALDHQDVFGVLLQQVGTTGEIHDYSALITELKSRKVVVSVAADFMALVLLTAPGKQGADIVFGSAQRFGVPMGYGGPHAAFFAAKDEFKRSMPGRIIGVSKDAAGNTALRMAMQTREQHIRREKANSNICTSQVLLANIASLYAVYHGPVGLKRIANRIHRLTDILAAGLQQKGLKLRHAHYFDTLCVEVADKAAVLARAEAAEINLRSDIHNAVGITLDETTTRENVAQLFNVLLGDSHGLNIETLDKDVALDSRSIQQSMLRDDAILTHPVFNRYHSETEMMRYMHSLERKDLALNQAMIPLGSCTMKLNAAAEMIPITWPEFAELHPFCPPEQAEGYHQMISQLSDWLVKLTGYDAVCMQPNSGAQGEYAGLLAIRHYHESRNEGHRDICLIPASAHGTNPASAHMAGMQVVVVACDKNGNIDLDDLRAKAEQHAANLSCIMVTYPSTHGVYEETIREVCEVVHQFGGQVYLDGANMNAQVGITSPGFIGADVSHLNLHKTFCIPHGGGGPGMGPIGVKAHLAPFVPGHSVVQIEGMLTRQGAVSAAPFGSASILPISWMYIRMMGAEGLKQASQVAILNANYIASRLKDAYPVLYTGRDGRVAHECILDIRPLKEETGISELDIAKRLIDYGFHAPTMSFPVAGTLMVEPTESEGKAELDRFIDAMLAIRAEIDQVKAGVWPLEDNPLVNAPHIQSELVAEWAHPYSREVAVFPAGVADKYWPTVKRLDDVYGDRNLFCSCVPISDYQ.

Lys-708 carries the post-translational modification N6-(pyridoxal phosphate)lysine.

Belongs to the GcvP family. In terms of assembly, the glycine cleavage system is composed of four proteins: P, T, L and H. Pyridoxal 5'-phosphate is required as a cofactor.

The catalysed reaction is N(6)-[(R)-lipoyl]-L-lysyl-[glycine-cleavage complex H protein] + glycine + H(+) = N(6)-[(R)-S(8)-aminomethyldihydrolipoyl]-L-lysyl-[glycine-cleavage complex H protein] + CO2. The glycine cleavage system catalyzes the degradation of glycine. The P protein binds the alpha-amino group of glycine through its pyridoxal phosphate cofactor; CO(2) is released and the remaining methylamine moiety is then transferred to the lipoamide cofactor of the H protein. This Salmonella typhimurium (strain LT2 / SGSC1412 / ATCC 700720) protein is Glycine dehydrogenase (decarboxylating).